Consider the following 488-residue polypeptide: UDP-N-acetylmuramate--L-alanine ligase (488 aa).

An ATP-binding site is contributed by 127–133 (GTHGKTT).

This sequence belongs to the MurCDEF family.

Its subcellular location is the cytoplasm. The enzyme catalyses UDP-N-acetyl-alpha-D-muramate + L-alanine + ATP = UDP-N-acetyl-alpha-D-muramoyl-L-alanine + ADP + phosphate + H(+). Its pathway is cell wall biogenesis; peptidoglycan biosynthesis. Functionally, cell wall formation. This is UDP-N-acetylmuramate--L-alanine ligase from Shewanella baltica (strain OS223).